Consider the following 581-residue polypeptide: MAGRIPRVFINDLLARTDIVDLIDVRVKLKKQGKNYHACCPFHNEKTPSFTVNGEKQFYHCFGCGAHGNAIDFLMNYDKLEFVETVEELAAMHNLEIPYEAGTGLSQIERHQRQNLYQLMNGLNDFYQQSLTHPAAKPARDYLQKRGLSAEIIQRFAIGFAPPGWDNALKRFGNNSDNKALLLDAGMLVNNEQGSTYDRFRNRVMFPIRDKRGRVIGFGGRVLGNDTPKYLNSPETDIFHKGRQLYGLYEAQQYSAEPQRLLVVEGYMDVVALAQYDINYAVASLGTSTTADHMHMLFRATNNVICCYDGDRAGRDAAWRALETAMPYMTDGRQVRFMFLPDGEDPDTLVRKEGKAAFEARMEQAQPLSTFLFNSLLPQVDLSSPDGSTQLAALALPLINQVPGDAHRIQLRQTLGLKLGIFDDSQLDRLVPKQAESGVSRPAPQLKRTTMRILIGLLVQNPDLAPLVPPLDALDQNKLPGLGLFKELVKTCLAQPGLTTGQLLELYRGTNDAATLEKLSMWDDIADKAIAEKTFTDSLNHMFDSLLQLRQEELIARDRTHGLSSEERRELWTLNQELARK.

The segment at 40–64 (CPFHNEKTPSFTVNGEKQFYHCFGC) adopts a CHC2-type zinc-finger fold. Residues 259 to 341 (QRLLVVEGYM…GRQVRFMFLP (83 aa)) form the Toprim domain. Mg(2+) is bound by residues E265, D309, and D311.

Belongs to the DnaG primase family. Monomer. Interacts with DnaB. Zn(2+) is required as a cofactor. Mg(2+) serves as cofactor.

It carries out the reaction ssDNA + n NTP = ssDNA/pppN(pN)n-1 hybrid + (n-1) diphosphate.. Its function is as follows. RNA polymerase that catalyzes the synthesis of short RNA molecules used as primers for DNA polymerase during DNA replication. The protein is DNA primase of Salmonella typhimurium (strain LT2 / SGSC1412 / ATCC 700720).